Here is a 479-residue protein sequence, read N- to C-terminus: MAGTVSLELDPIFLKGLGYLHSKSKDSAEKLKALLDESLARGSDSIYRNSIKEAEVSKVSLPKMTKQDSKSSSSSSASSSITTTSSSKSSTSEKSKKESEKRTLEKIRVDPGEGVEPPKKPRLEKQDSHSSPIAFQTKDIPIPDFTDIDETNADDFAMEMGLACVVCRQMTVTSGNQLVECQECHNLYHQECHKPQVTDKDVNDPRLVWYCARCTRQMKRMAQKTQKPPQKPAPALATTVPLLKDPLVKKAELKPKPETTGSFQAFKRTEVKATAASGNSSSSSSSSSSLPPGLTGWAAFTKATSNVGPSSTKLSTSQSGNSKTSPAASGSKPVGLSALANVKPALATKPSGGSSAGSGNGNNGSGTVPLKAPPPLTLGKQVLSRSASGDSLGKMTVTGSLSPGAAPSSSLGGNGGSGGNGAGNGGNSAGSSSSSGNNNNNGAKASADGKAPTSQESQLNAMKRLQMVKKKAAQKKLKK.

Positions 57 to 140 are disordered; sequence SKVSLPKMTK…SPIAFQTKDI (84 aa). Residues 70–90 show a composition bias toward low complexity; sequence KSSSSSSASSSITTTSSSKSS. The span at 91–128 shows a compositional bias: basic and acidic residues; the sequence is TSEKSKKESEKRTLEKIRVDPGEGVEPPKKPRLEKQDS. The PHD-type zinc-finger motif lies at 161 to 217; the sequence is GLACVVCRQMTVTSGNQLVECQECHNLYHQECHKPQVTDKDVNDPRLVWYCARCTRQ. 3 disordered regions span residues 221–241, 274–293, and 305–479; these read MAQK…TTVP, TAAS…LPPG, and SNVG…KLKK. Composition is skewed to low complexity over residues 223–239 and 280–289; these read QKTQ…LATT and SSSSSSSSSS. Residues 305–328 show a composition bias toward polar residues; the sequence is SNVGPSSTKLSTSQSGNSKTSPAA. Over residues 354 to 364 the composition is skewed to gly residues; the sequence is SSAGSGNGNNG. A compositionally biased stretch (low complexity) spans 399 to 411; it reads GSLSPGAAPSSSL. The span at 412 to 428 shows a compositional bias: gly residues; it reads GGNGGSGGNGAGNGGNS. Over residues 429-451 the composition is skewed to low complexity; the sequence is AGSSSSSGNNNNNGAKASADGKA. Basic residues predominate over residues 466–479; the sequence is QMVKKKAAQKKLKK.

The protein belongs to the Integrator subunit 12 family. Component of the Integrator complex, composed of core subunits INTS1, INTS2, INTS3, INTS4, INTS5, INTS6, INTS7, INTS8, INTS9/RC74, INTS10, INTS11/CPSF3L, INTS12, INTS13, INTS14 and INTS15. The core complex associates with protein phosphatase 2A subunits PPP2CA and PPP2R1A, to form the Integrator-PP2A (INTAC) complex.

It is found in the nucleus. In terms of biological role, component of the integrator complex, a multiprotein complex that terminates RNA polymerase II (Pol II) transcription in the promoter-proximal region of genes. The integrator complex provides a quality checkpoint during transcription elongation by driving premature transcription termination of transcripts that are unfavorably configured for transcriptional elongation: the complex terminates transcription by (1) catalyzing dephosphorylation of the C-terminal domain (CTD) of Pol II subunit POLR2A/RPB1 and SUPT5H/SPT5, (2) degrading the exiting nascent RNA transcript via endonuclease activity and (3) promoting the release of Pol II from bound DNA. The integrator complex is also involved in terminating the synthesis of non-coding Pol II transcripts, such as enhancer RNAs (eRNAs), small nuclear RNAs (snRNAs), telomerase RNAs and long non-coding RNAs (lncRNAs). This chain is Integrator complex subunit 12 (ints12), found in Danio rerio (Zebrafish).